The following is a 79-amino-acid chain: Translational regulator CsrA (79 aa).

The protein belongs to the CsrA/RsmA family. Homodimer; the beta-strands of each monomer intercalate to form a hydrophobic core, while the alpha-helices form wings that extend away from the core.

It is found in the cytoplasm. Its function is as follows. A translational regulator that binds mRNA to regulate translation initiation and/or mRNA stability. Usually binds in the 5'-UTR at or near the Shine-Dalgarno sequence preventing ribosome-binding, thus repressing translation. Its main target seems to be the major flagellin gene, while its function is anatagonized by FliW. This Geobacter sulfurreducens (strain ATCC 51573 / DSM 12127 / PCA) protein is Translational regulator CsrA.